Here is a 546-residue protein sequence, read N- to C-terminus: Chaperonin GroEL (546 aa).

Residues threonine 29–proline 32, lysine 50, aspartate 86–threonine 90, glycine 414, asparagine 477–leucine 479, and aspartate 493 each bind ATP. The interval lysine 522–methionine 546 is disordered. The span at glycine 533–methionine 546 shows a compositional bias: gly residues.

Belongs to the chaperonin (HSP60) family. In terms of assembly, forms a cylinder of 14 subunits composed of two heptameric rings stacked back-to-back. Interacts with the co-chaperonin GroES.

It localises to the cytoplasm. The catalysed reaction is ATP + H2O + a folded polypeptide = ADP + phosphate + an unfolded polypeptide.. Its function is as follows. Together with its co-chaperonin GroES, plays an essential role in assisting protein folding. The GroEL-GroES system forms a nano-cage that allows encapsulation of the non-native substrate proteins and provides a physical environment optimized to promote and accelerate protein folding. This is Chaperonin GroEL from Leptospira borgpetersenii serovar Hardjo-bovis (strain JB197).